We begin with the raw amino-acid sequence, 207 residues long: Phenazine biosynthesis protein PhzD1 (207 aa).

The Proton donor role is filled by Asp-38. Residues Gln-78, Arg-87, Lys-122, and 151–155 (YAHVG) each bind substrate.

This sequence belongs to the isochorismatase family. In terms of assembly, homodimer.

It carries out the reaction (2S)-2-amino-4-deoxychorismate + H2O = (5S,6S)-6-amino-5-hydroxycyclohexa-1,3-diene-1-carboxyate + pyruvate. The protein operates within antibiotic biosynthesis; phenazine biosynthesis. Functionally, involved in the biosynthesis of the antibiotic phenazine, a nitrogen-containing heterocyclic molecule. PhzD1 (operon phzA1B1C1E1F1G1) has a role in the biosynthesis of the phenazine during planktonic growth. Catalyzes the hydrolysis of the vinyl ether functional group of 2-amino-2-deoxyisochorismate (ADIC), yielding pyruvate and trans-2,3-dihydro-3-hydroxyanthranilic acid (DHHA). Also able to act on isochorismate, chorismate and 4-amino-4-deoxychorismate (ADC) as substrates. The polypeptide is Phenazine biosynthesis protein PhzD1 (Pseudomonas aeruginosa (strain ATCC 15692 / DSM 22644 / CIP 104116 / JCM 14847 / LMG 12228 / 1C / PRS 101 / PAO1)).